The sequence spans 280 residues: Putative pyruvate, phosphate dikinase regulatory protein (280 aa).

Residue 149–156 coordinates ADP; that stretch reads GVSRSSKT.

Belongs to the pyruvate, phosphate/water dikinase regulatory protein family. PDRP subfamily.

The catalysed reaction is N(tele)-phospho-L-histidyl/L-threonyl-[pyruvate, phosphate dikinase] + ADP = N(tele)-phospho-L-histidyl/O-phospho-L-threonyl-[pyruvate, phosphate dikinase] + AMP + H(+). It catalyses the reaction N(tele)-phospho-L-histidyl/O-phospho-L-threonyl-[pyruvate, phosphate dikinase] + phosphate + H(+) = N(tele)-phospho-L-histidyl/L-threonyl-[pyruvate, phosphate dikinase] + diphosphate. Bifunctional serine/threonine kinase and phosphorylase involved in the regulation of the pyruvate, phosphate dikinase (PPDK) by catalyzing its phosphorylation/dephosphorylation. In Novosphingobium aromaticivorans (strain ATCC 700278 / DSM 12444 / CCUG 56034 / CIP 105152 / NBRC 16084 / F199), this protein is Putative pyruvate, phosphate dikinase regulatory protein.